Consider the following 395-residue polypeptide: Terminal nucleotidyltransferase 5B (395 aa).

Belongs to the TENT family.

Its subcellular location is the cytoplasm. It is found in the nucleus. The enzyme catalyses RNA(n) + ATP = RNA(n)-3'-adenine ribonucleotide + diphosphate. Its function is as follows. Catalyzes the transfer of one adenosine molecule from an ATP to an mRNA poly(A) tail bearing a 3'-OH terminal group in an ATP hydrolysis-dependent manner and participates in cytoplasmic polyadenylation. May be involved in maintaining the translation efficiency of at least some genes through preventing degradation of their mRNAs. The polypeptide is Terminal nucleotidyltransferase 5B (Xenopus tropicalis (Western clawed frog)).